The following is a 275-amino-acid chain: Uridine-5'-phosphate dioxygenase (275 aa).

Positions 105, 107, and 247 each coordinate Fe cation.

The cofactor is Fe(2+).

It catalyses the reaction UMP + 2-oxoglutarate + O2 = uridine-5'-aldehyde + succinate + phosphate + CO2. Its pathway is antibiotic biosynthesis. Its activity is regulated as follows. Enhanced by ascorbic acid and inhibited by Zn(2+). Its function is as follows. Dioxygenase involved in the biosynthesis of the capuramycin-type nucleoside antibiotic A-102395. Catalyzes the dephosphorylation and oxidation of UMP to generate uridine-5'-aldehyde. Can also use the alternative alpha-keto acids pyruvate and alpha-ketoadipate (2-oxoadipate), with very low efficiency. Cannot use alpha-ketobutyrate, alpha-ketovalerate and oxaloacetate. The protein is Uridine-5'-phosphate dioxygenase of Amycolatopsis sp.